Here is a 5206-residue protein sequence, read N- to C-terminus: Multifunctional-autoprocessing repeats-in-toxin (5206 aa).

Positions 1–19 (MGKPFWRSVEYFFTGNYSA) are cleaved as a signal peptide. RtxA repeat units follow at residues 101-118 (GAAG…GDVS), 121-138 (GAAA…GNVT), 141-157 (GAGG…QGNL), 161-184 (GAGA…GDVT), 187-204 (GAGA…GNIT), 207-224 (GAGA…GDIT), 255-272 (GVGG…GDIH), 275-291 (GGGA…GSSF), 584-601 (GAGG…GNVY), 604-620 (GGGI…FGNT), 624-641 (GGGA…GDLT), 644-658 (GAGL…SKQG), 741-753 (AGGA…VGDG), 759-771 (MLGG…HISG), 782-798 (ALGG…GNTL), 801-816 (MGGG…DGTT), 820-835 (MVGG…NGDT), 841-855 (GVGN…GQTL), 858-875 (MGAA…TSIA), 877-891 (MIGA…GEGN), 896-910 (MGGL…GNGD), 915-932 (MVAE…MSVA), 934-950 (MLAK…GTTL), 972-984 (MIGQ…KVGN), 991-1006 (MVGK…DGTS), 1031-1043 (GKAN…GDGL), 1067-1079 (AAAK…HVGD), 1087-1102 (AGKG…GTTV), 1110-1122 (GNVM…GTTI), 1125-1142 (AKGK…LGVN), 1145-1159 (WGQA…DGDR), 1163-1179 (AKGE…GKEV), 1184-1199 (GKAN…DDYT), 1201-1217 (AWGK…GRNV), 1220-1236 (AKGE…GDSF), 1242-1256 (KGNI…MQVT), 1258-1275 (AKGK…LSVT), 1296-1313 (AWGK…LNVA), and 1315-1332 (MKGK…LNIN). Positions 1606–1626 (SQQANAVSEHATQNQASQNAL) are enriched in polar residues. 2 disordered regions span residues 1606-1682 (SQQA…ESEA) and 1738-1895 (IAAA…EQEA). The span at 1627–1646 (SDKERAEADRQRLEQEKQKQ) shows a compositional bias: basic and acidic residues. Over residues 1652–1671 (GSQSQLESTDQQALGNNGQA) the composition is skewed to polar residues. Basic and acidic residues predominate over residues 1778–1805 (AEAKADAETRKADAVAKSNDAKQAESDA). Positions 1825 to 1834 (NKANQAQNDA) are enriched in polar residues. Residues 1835-1849 (KGTKQNEGDRPDREG) are compositionally biased toward basic and acidic residues. A compositionally biased stretch (polar residues) spans 1870 to 1880 (SHITTDSQTNA). The membrane localization region (MLD) stretch occupies residues 2377–2461 (ELMSVTELLD…SLLNQVNSRL (85 aa)). A rho inactivation domain (RID) region spans residues 2537–2901 (EYGQVVADTI…HQVTDVLDAL (365 aa)). The ABH effector region stretch occupies residues 2998–3113 (VVLFLHGSGS…MPSMTKAITA (116 aa)). The Peptidase C80 domain maps to 4111 to 4295 (PTADGGESRF…AENNKVSLSW (185 aa)). 1D-myo-inositol hexakisphosphate-binding positions include 4117 to 4119 (ESR), 4144 to 4145 (KH), and Arg-4175. The active-site For cysteine protease activity is His-4181. Ser-4226 lines the 1D-myo-inositol hexakisphosphate pocket. The active-site Nucleophile; for cysteine protease activity is Cys-4230. 1D-myo-inositol hexakisphosphate-binding positions include 4259 to 4261 (SVR), 4272 to 4273 (RK), Lys-4285, and Lys-4290. Disordered stretches follow at residues 4333 to 4362 (GAIG…ANNK) and 4738 to 4779 (LKEK…ETPD). The segment covering 4750–4762 (SSVSVNGASVNSA) has biased composition (low complexity).

Mg(2+) is required as a cofactor.

Its subcellular location is the secreted. It localises to the host cytoplasm. The protein localises to the host cytosol. The protein resides in the host cell membrane. The enzyme catalyses L-lysyl-/S-(2E,6E,10E)-geranylgeranyl-L-cysteinyl-[protein] + hexadecanoyl-CoA = N(6)-hexadecanoyl-L-lysyl-/S-(2E,6E,10E)-geranylgeranyl-L-cysteinyl-[protein] + CoA + H(+). It carries out the reaction L-lysyl-/S-(2E,6E,10E)-geranylgeranyl-L-cysteinyl-[protein] + dodecanoyl-CoA = N(6)-dodecanoyl-L-lysyl-/S-(2E,6E,10E)-geranylgeranyl-L-cysteinyl-[protein] + CoA + H(+). The catalysed reaction is L-lysyl-/S-(2E,6E,10E)-geranylgeranyl-L-cysteinyl-[protein] + decanoyl-CoA = N(6)-decanoyl-L-lysyl-/S-(2E,6E,10E)-geranylgeranyl-L-cysteinyl-[protein] + CoA + H(+). Precursor of a multifunctional toxin that causes destruction of the actin cytoskeleton by covalent cross-linking of actin and inactivation of Rho GTPases when translocated into the host cytoplasm. Upon translocation into the host cell, undergoes autoprocessing in cis mediated by the peptidase C80 domain (also named CPD domain): the protease activity is activated upon binding inositol hexakisphosphate (InsP6) present at the host cell membrane and delivers the Cysteine protease domain-containing toxin F3 chain to the host cytosol. The Cysteine protease domain-containing toxin F3 chain will then further cleave and release effector toxin chains that cause disassembly of the actin cytoskeleton and enhance V.vulnificus colonization of the small intestine, possibly by facilitating evasion of phagocytic cells. Functionally, following autocatalytic cleavage in cis, this chain mediates processing in trans to release other individual toxin chains to the host cytosol. Released effector toxin chains cause disassembly of the actin cytoskeleton and enhance V.vulnificus colonization of the small intestine, possibly by facilitating evasion of phagocytic cells. In terms of biological role, actin-directed toxin that catalyzes the covalent cross-linking of host cytoplasmic monomeric actin. Mediates the cross-link between 'Lys-50' of one monomer and 'Glu-270' of another actin monomer, resulting in formation of highly toxic actin oligomers that cause cell rounding. The toxin can be highly efficient at very low concentrations by acting on formin homology family proteins: toxic actin oligomers bind with high affinity to formins and adversely affect both nucleation and elongation abilities of formins, causing their potent inhibition in both profilin-dependent and independent manners. Acts as an acid--amino-acid ligase that transfers the gamma-phosphoryl group of ATP to the 'Glu-270' actin residue, resulting in the formation of an activated acyl phosphate intermediate. This intermediate is further hydrolyzed and the energy of hydrolysis is utilized for the formation of the amide bond between actin subunits. Its function is as follows. N-epsilon-fatty acyltransferase that mediates lysine-palmitoylation of host Rho GTPase proteins, with a strong preference for host Rac1. After delivery to the host cytosol, localizes to the host cell membrane where it palmitoylates host Rho GTPase proteins, resulting in loss of all active GTP-bound Rho and subsequent actin depolymerization. Prenylation of host Rac1 at the C-terminus is required for lysine-palmitoylation. Indirectly activates the small GTPase CDC42. This chain is Multifunctional-autoprocessing repeats-in-toxin, found in Vibrio vulnificus.